A 215-amino-acid polypeptide reads, in one-letter code: Cytochrome b6 (215 aa).

The chain crosses the membrane as a helical span at residues 32–52; that stretch reads IFYCLGGITLVCFLIQFATGF. Residue Cys35 participates in heme c binding. Heme b is bound by residues His86 and His100. A run of 3 helical transmembrane segments spans residues 90–110, 116–136, and 186–206; these read ASMM…TGGF, LTWV…VTGY, and LHTF…FLMI. Heme b is bound by residues His187 and His202.

This sequence belongs to the cytochrome b family. PetB subfamily. In terms of assembly, the 4 large subunits of the cytochrome b6-f complex are cytochrome b6, subunit IV (17 kDa polypeptide, PetD), cytochrome f and the Rieske protein, while the 4 small subunits are PetG, PetL, PetM and PetN. The complex functions as a dimer. Heme b is required as a cofactor. The cofactor is heme c.

The protein resides in the cellular thylakoid membrane. Its function is as follows. Component of the cytochrome b6-f complex, which mediates electron transfer between photosystem II (PSII) and photosystem I (PSI), cyclic electron flow around PSI, and state transitions. The polypeptide is Cytochrome b6 (Synechococcus sp. (strain JA-3-3Ab) (Cyanobacteria bacterium Yellowstone A-Prime)).